The following is a 392-amino-acid chain: Chorismate synthase (392 aa).

The NADP(+) site is built by arginine 40 and arginine 46. FMN is bound by residues 135–137 (RAS), 256–257 (QA), glycine 300, 315–319 (KPIST), and arginine 341.

It belongs to the chorismate synthase family. Homotetramer. FMNH2 serves as cofactor.

It carries out the reaction 5-O-(1-carboxyvinyl)-3-phosphoshikimate = chorismate + phosphate. Its pathway is metabolic intermediate biosynthesis; chorismate biosynthesis; chorismate from D-erythrose 4-phosphate and phosphoenolpyruvate: step 7/7. In terms of biological role, catalyzes the anti-1,4-elimination of the C-3 phosphate and the C-6 proR hydrogen from 5-enolpyruvylshikimate-3-phosphate (EPSP) to yield chorismate, which is the branch point compound that serves as the starting substrate for the three terminal pathways of aromatic amino acid biosynthesis. This reaction introduces a second double bond into the aromatic ring system. This chain is Chorismate synthase, found in Acidothermus cellulolyticus (strain ATCC 43068 / DSM 8971 / 11B).